Reading from the N-terminus, the 121-residue chain is Small ribosomal subunit protein uS13 (121 aa).

Residues 91 to 121 (HRMSLPVRGQRTRTNARTRRGSRKTVAGRKK) are disordered. Over residues 100–121 (QRTRTNARTRRGSRKTVAGRKK) the composition is skewed to basic residues.

The protein belongs to the universal ribosomal protein uS13 family. In terms of assembly, part of the 30S ribosomal subunit. Forms a loose heterodimer with protein S19. Forms two bridges to the 50S subunit in the 70S ribosome.

Its function is as follows. Located at the top of the head of the 30S subunit, it contacts several helices of the 16S rRNA. In the 70S ribosome it contacts the 23S rRNA (bridge B1a) and protein L5 of the 50S subunit (bridge B1b), connecting the 2 subunits; these bridges are implicated in subunit movement. Contacts the tRNAs in the A and P-sites. The polypeptide is Small ribosomal subunit protein uS13 (Prochlorococcus marinus (strain SARG / CCMP1375 / SS120)).